Consider the following 841-residue polypeptide: SLIT and NTRK-like protein 6 (841 aa).

A signal peptide spans 1–26 (MKLWIHLFYSSLLACISLHSQTPVLS). The 41-residue stretch at 27–67 (SRGSCDSLCNCEEKDGTMLINCEAKGIKMVSEISVPPSRPF) folds into the LRRNT 1 domain. At 27 to 608 (SRGSCDSLCN…RSLTDAVPLS (582 aa)) the chain is on the extracellular side. LRR repeat units lie at residues 89–110 (NAISIHLGFNNIADIEIGAFNG), 113–134 (LLKQLHINHNSLEILKEDTFHG), 137–158 (NLEFLQADNNFITVIEPSAFSK), 161–182 (RLKVLILNDNAIESLPPNIFRF), and 184–205 (PLTHLDLRGNQLQTLPYVGFLE). In terms of domain architecture, LRRCT 1 spans 218–269 (NKWACNCDLLQLKTWLENMPPQSIIGDVVCNSPPFFKGSILSRLKKESICPT). In terms of domain architecture, LRRNT 2 spans 320–361 (PSTQLPGPYCPIPCNCKVLSPSGLLIHCQERNIESLSDLRPP). 6 LRR repeats span residues 364 to 385 (NPRKLILAGNIIHSLMKSDLVE), 388 to 409 (TLEMLHLGNNRIEVLEEGSFMN), 412 to 433 (RLQKLYLNGNHLTKLSKGMFLG), 436 to 457 (NLEYLYLEYNAIKEILPGTFNP), 460 to 481 (KLKVLYLNNNLLQVLPPHIFSG), and 483 to 504 (PLTKVNLKTNQFTHLPVSNILD). The 52-residue stretch at 517-568 (NPWDCSCDLVGLQQWIQKLSKNTVTDDILCTSPGHLDKKELKALNSEILCPG) folds into the LRRCT 2 domain. A helical membrane pass occupies residues 609–629 (VLILGLLIMFITIVFCAAGIV). Over 630 to 841 (VLVLHRRRRY…DYLEVLEQQT (212 aa)) the chain is Cytoplasmic.

The protein belongs to the SLITRK family. In adult brain, highly expressed in putamen with no expression in cerebral cortex. Expressed in adult and fetal lung and fetal liver. Also expressed at high levels in some brain tumors including medulloblastomas and primitive neuroectodermal tumors.

The protein resides in the cell membrane. In terms of biological role, regulator of neurite outgrowth required for normal hearing and vision. The polypeptide is SLIT and NTRK-like protein 6 (SLITRK6) (Homo sapiens (Human)).